We begin with the raw amino-acid sequence, 598 residues long: Aspartate--tRNA(Asp/Asn) ligase (598 aa).

E174 contacts L-aspartate. The interval 198–201 (QQLK) is aspartate. R220 provides a ligand contact to L-aspartate. Residues 220–222 (RDE) and Q229 each bind ATP. H458 provides a ligand contact to L-aspartate. E492 is an ATP binding site. R499 lines the L-aspartate pocket. 544 to 547 (GIDR) serves as a coordination point for ATP.

It belongs to the class-II aminoacyl-tRNA synthetase family. Type 1 subfamily. In terms of assembly, homodimer.

It localises to the cytoplasm. The catalysed reaction is tRNA(Asx) + L-aspartate + ATP = L-aspartyl-tRNA(Asx) + AMP + diphosphate. Its function is as follows. Aspartyl-tRNA synthetase with relaxed tRNA specificity since it is able to aspartylate not only its cognate tRNA(Asp) but also tRNA(Asn). Reaction proceeds in two steps: L-aspartate is first activated by ATP to form Asp-AMP and then transferred to the acceptor end of tRNA(Asp/Asn). In Dehalococcoides mccartyi (strain ATCC BAA-2100 / JCM 16839 / KCTC 5957 / BAV1), this protein is Aspartate--tRNA(Asp/Asn) ligase.